Here is a 387-residue protein sequence, read N- to C-terminus: Gamma-butyrobetaine dioxygenase (387 aa).

Zn(2+) contacts are provided by C38, C40, C43, and H82. Fe cation contacts are provided by H202, D204, and H347. Position 351 is a phosphoserine (S351).

Belongs to the gamma-BBH/TMLD family. The cofactor is Fe(2+). L-ascorbate serves as cofactor. Highly expressed in kidney; moderately expressed in liver; very low expression in brain.

It localises to the cytoplasm. The catalysed reaction is 4-(trimethylamino)butanoate + 2-oxoglutarate + O2 = carnitine + succinate + CO2. The protein operates within amine and polyamine biosynthesis; carnitine biosynthesis. Catalyzes the formation of L-carnitine from gamma-butyrobetaine. The protein is Gamma-butyrobetaine dioxygenase (BBOX1) of Homo sapiens (Human).